Here is a 264-residue protein sequence, read N- to C-terminus: Thymidylate synthase (264 aa).

Residue R21 coordinates dUMP. Residue H51 participates in (6R)-5,10-methylene-5,6,7,8-tetrahydrofolate binding. Position 126 to 127 (126 to 127) interacts with dUMP; sequence RR. Residue C146 is the Nucleophile of the active site. DUMP-binding positions include 166 to 169, N177, and 207 to 209; these read RSCD and HLY. D169 contacts (6R)-5,10-methylene-5,6,7,8-tetrahydrofolate. A263 serves as a coordination point for (6R)-5,10-methylene-5,6,7,8-tetrahydrofolate.

Belongs to the thymidylate synthase family. Bacterial-type ThyA subfamily. In terms of assembly, homodimer.

It is found in the cytoplasm. It catalyses the reaction dUMP + (6R)-5,10-methylene-5,6,7,8-tetrahydrofolate = 7,8-dihydrofolate + dTMP. The protein operates within pyrimidine metabolism; dTTP biosynthesis. Catalyzes the reductive methylation of 2'-deoxyuridine-5'-monophosphate (dUMP) to 2'-deoxythymidine-5'-monophosphate (dTMP) while utilizing 5,10-methylenetetrahydrofolate (mTHF) as the methyl donor and reductant in the reaction, yielding dihydrofolate (DHF) as a by-product. This enzymatic reaction provides an intracellular de novo source of dTMP, an essential precursor for DNA biosynthesis. The protein is Thymidylate synthase of Shigella flexneri serotype 5b (strain 8401).